Consider the following 906-residue polypeptide: Serine-aspartate repeat-containing protein C (906 aa).

The signal sequence occupies residues methionine 1–alanine 50. The disordered stretch occupies residues alanine 51–threonine 127. The ligand binding A region stretch occupies residues alanine 51–lysine 486. Polar residues-rich tracts occupy residues glycine 56–asparagine 71 and arginine 80–proline 119. CNA-B domains are found at residues lysine 487–proline 597 and lysine 598–threonine 708. A disordered region spans residues lysine 669–asparagine 881. 2 stretches are compositionally biased toward acidic residues: residues threonine 676–glutamate 686 and tyrosine 703–serine 845. The LPXTG sorting signal signature appears at leucine 869 to glycine 873. Threonine 872 carries the post-translational modification Pentaglycyl murein peptidoglycan amidated threonine. The propeptide at glycine 873–lysine 906 is removed by sortase.

Belongs to the serine-aspartate repeat-containing protein (SDr) family. As to quaternary structure, homodimerizes; via N2-Domain. Interacts with host NRXN1; this interaction mediates bacterial attachment to host cells.

The protein localises to the secreted. It localises to the cell wall. Cell surface-associated calcium-binding protein which plays an important role in adhesion and pathogenesis. Mediates interactions with components of the extracellular matrix such as host NRXN1 to promote bacterial adhesion. The chain is Serine-aspartate repeat-containing protein C (sdrC) from Staphylococcus aureus (strain MRSA252).